A 125-amino-acid chain; its full sequence is Small ribosomal subunit protein bS6 (125 aa).

Belongs to the bacterial ribosomal protein bS6 family.

In terms of biological role, binds together with bS18 to 16S ribosomal RNA. In Campylobacter jejuni subsp. jejuni serotype O:23/36 (strain 81-176), this protein is Small ribosomal subunit protein bS6.